Consider the following 1400-residue polypeptide: S phase cyclin A-associated protein in the endoplasmic reticulum (1400 aa).

Disordered stretches follow at residues 36 to 61, 226 to 277, 517 to 550, and 701 to 723; these read ESKD…GTHK, VKAH…IRSR, PARP…HEEK, and RIEQ…RARD. A compositionally biased stretch (polar residues) spans 231 to 243; sequence TGSTASSEITPAQ. The span at 539 to 550 shows a compositional bias: basic and acidic residues; that stretch reads TIAESKKKHEEK. The segment at 792–816 adopts a C2H2-type zinc-finger fold; it reads KQCSLCNVLISSEVYLFSHVKGRKH. Ser-832 bears the Phosphoserine mark.

In terms of assembly, interacts with CCNA2/CDK2 complex, but not with CCNA2/CDC2, CCNB1/CDC2 or CCNE1/CDK2 complexes, at multiple phases of the cell cycle, including S and G2/M. Phosphorylated in vitro by the CCNA2/CDK2 complex. As to expression, widely expressed with high expression in testis. Isoform 1 is detected in various tissues, including retina, fetal and adult brain. Isoform 2 is expressed in the retina at high levels, and in the brain at very low levels.

The protein localises to the endoplasmic reticulum. Its subcellular location is the nucleus. CCNA2/CDK2 regulatory protein that transiently maintains CCNA2 in the cytoplasm. The protein is S phase cyclin A-associated protein in the endoplasmic reticulum of Homo sapiens (Human).